The following is a 294-amino-acid chain: ATP phosphoribosyltransferase (294 aa).

Belongs to the ATP phosphoribosyltransferase family. Long subfamily. It depends on Mg(2+) as a cofactor.

It is found in the cytoplasm. The enzyme catalyses 1-(5-phospho-beta-D-ribosyl)-ATP + diphosphate = 5-phospho-alpha-D-ribose 1-diphosphate + ATP. The protein operates within amino-acid biosynthesis; L-histidine biosynthesis; L-histidine from 5-phospho-alpha-D-ribose 1-diphosphate: step 1/9. Feedback inhibited by histidine. Its function is as follows. Catalyzes the condensation of ATP and 5-phosphoribose 1-diphosphate to form N'-(5'-phosphoribosyl)-ATP (PR-ATP). Has a crucial role in the pathway because the rate of histidine biosynthesis seems to be controlled primarily by regulation of HisG enzymatic activity. The polypeptide is ATP phosphoribosyltransferase (Prosthecochloris aestuarii (strain DSM 271 / SK 413)).